A 205-amino-acid polypeptide reads, in one-letter code: Adenylyl-sulfate kinase (205 aa).

Residue 31-38 (GLSGAGKS) participates in ATP binding. Catalysis depends on Ser-105, which acts as the Phosphoserine intermediate.

It belongs to the APS kinase family.

It carries out the reaction adenosine 5'-phosphosulfate + ATP = 3'-phosphoadenylyl sulfate + ADP + H(+). It functions in the pathway sulfur metabolism; hydrogen sulfide biosynthesis; sulfite from sulfate: step 2/3. In terms of biological role, catalyzes the synthesis of activated sulfate. The sequence is that of Adenylyl-sulfate kinase from Shewanella denitrificans (strain OS217 / ATCC BAA-1090 / DSM 15013).